A 337-amino-acid chain; its full sequence is Molybdate import system permease protein MolB (337 aa).

At methionine 1 to serine 5 the chain is on the cytoplasmic side. A helical membrane pass occupies residues tyrosine 6–leucine 25. Residues glycine 26–aspartate 51 are Periplasmic-facing. A helical transmembrane segment spans residues proline 52–phenylalanine 87. Residues arginine 88–glycine 98 are Cytoplasmic-facing. The helical transmembrane segment at valine 99–phenylalanine 113 threads the bilayer. At glycine 114–serine 116 the chain is on the periplasmic side. The chain crosses the membrane as a helical span at residues leucine 117–phenylalanine 140. Residues lysine 141–serine 146 lie on the Cytoplasmic side of the membrane. The helical transmembrane segment at leucine 147–isoleucine 171 threads the bilayer. Residues serine 172 to asparagine 193 are Periplasmic-facing. A helical membrane pass occupies residues tryptophan 194–leucine 214. Residues serine 215 to lysine 234 lie on the Cytoplasmic side of the membrane. The chain crosses the membrane as a helical span at residues methionine 235 to serine 257. The Periplasmic segment spans residues glycine 258–glycine 264. A helical transmembrane segment spans residues leucine 265 to valine 275. Topologically, residues glycine 276–asparagine 278 are cytoplasmic. A helical transmembrane segment spans residues histidine 279–leucine 304. Over serine 305–proline 310 the chain is Periplasmic. Residues isoleucine 311–lysine 329 traverse the membrane as a helical segment. Topologically, residues leucine 330 to glutamate 337 are cytoplasmic.

The protein belongs to the binding-protein-dependent transport system permease family. FecCD subfamily. The complex is composed of two ATP-binding proteins (MolC), two transmembrane proteins (MolB) and a solute-binding protein (MolA).

The protein localises to the cell inner membrane. Its activity is regulated as follows. The MolBCA complex shows a decrease in affinity in the presence of increasing concentrations of substrate and nucleotide. Functionally, part of the ABC transporter complex MolBCA involved in molybdate import. Responsible for the translocation of the substrate across the membrane. Functions as a low-affinity molybdate transporter. This chain is Molybdate import system permease protein MolB, found in Haemophilus influenzae (strain ATCC 51907 / DSM 11121 / KW20 / Rd).